The primary structure comprises 274 residues: Cytochrome c oxidase subunit 3 (274 aa).

At Met-1–Pro-15 the chain is on the mitochondrial matrix side. Residues Trp-16–Trp-34 traverse the membrane as a helical segment. The Mitochondrial intermembrane segment spans residues Phe-35–Ser-40. A helical transmembrane segment spans residues Met-41–Thr-66. Topologically, residues Phe-67–Thr-72 are mitochondrial matrix. The chain crosses the membrane as a helical span at residues Ser-73–Ser-105. The Mitochondrial intermembrane segment spans residues Leu-106–Glu-128. Residues Val-129–Met-152 traverse the membrane as a helical segment. The Mitochondrial matrix segment spans residues Glu-153–Asn-155. A helical membrane pass occupies residues Arg-156–Glu-183. Over Thr-184–Asp-190 the chain is Mitochondrial intermembrane. The chain crosses the membrane as a helical span at residues Gly-191–Leu-223. The Mitochondrial matrix segment spans residues Ser-224 to His-232. A helical membrane pass occupies residues Phe-233–Ile-256. The Mitochondrial intermembrane portion of the chain corresponds to Tyr-257–Asn-274.

Belongs to the cytochrome c oxidase subunit 3 family. In terms of assembly, component of the cytochrome c oxidase (complex IV, CIV), a multisubunit enzyme composed of 14 subunits. The complex is composed of a catalytic core of 3 subunits MT-CO1, MT-CO2 and MT-CO3, encoded in the mitochondrial DNA, and 11 supernumerary subunits COX4I, COX5A, COX5B, COX6A, COX6B, COX6C, COX7A, COX7B, COX7C, COX8 and NDUFA4, which are encoded in the nuclear genome. The complex exists as a monomer or a dimer and forms supercomplexes (SCs) in the inner mitochondrial membrane with NADH-ubiquinone oxidoreductase (complex I, CI) and ubiquinol-cytochrome c oxidoreductase (cytochrome b-c1 complex, complex III, CIII), resulting in different assemblies (supercomplex SCI(1)III(2)IV(1) and megacomplex MCI(2)III(2)IV(2)).

Its subcellular location is the mitochondrion inner membrane. The catalysed reaction is 4 Fe(II)-[cytochrome c] + O2 + 8 H(+)(in) = 4 Fe(III)-[cytochrome c] + 2 H2O + 4 H(+)(out). Component of the cytochrome c oxidase, the last enzyme in the mitochondrial electron transport chain which drives oxidative phosphorylation. The respiratory chain contains 3 multisubunit complexes succinate dehydrogenase (complex II, CII), ubiquinol-cytochrome c oxidoreductase (cytochrome b-c1 complex, complex III, CIII) and cytochrome c oxidase (complex IV, CIV), that cooperate to transfer electrons derived from NADH and succinate to molecular oxygen, creating an electrochemical gradient over the inner membrane that drives transmembrane transport and the ATP synthase. Cytochrome c oxidase is the component of the respiratory chain that catalyzes the reduction of oxygen to water. Electrons originating from reduced cytochrome c in the intermembrane space (IMS) are transferred via the dinuclear copper A center (CU(A)) of subunit 2 and heme A of subunit 1 to the active site in subunit 1, a binuclear center (BNC) formed by heme A3 and copper B (CU(B)). The BNC reduces molecular oxygen to 2 water molecules using 4 electrons from cytochrome c in the IMS and 4 protons from the mitochondrial matrix. The sequence is that of Cytochrome c oxidase subunit 3 (MT-CO3) from Lemur catta (Ring-tailed lemur).